A 262-amino-acid chain; its full sequence is Small ribosomal subunit protein uS2 (262 aa).

Residues glycine 224 to serine 246 are disordered.

The protein belongs to the universal ribosomal protein uS2 family.

This Lacticaseibacillus casei (strain BL23) (Lactobacillus casei) protein is Small ribosomal subunit protein uS2.